The following is a 62-amino-acid chain: Metallothionein-4 (62 aa).

A divalent metal cation is bound by residues cysteine 6, cysteine 8, cysteine 14, cysteine 16, cysteine 20, cysteine 22, cysteine 25, cysteine 27, cysteine 34, cysteine 35, cysteine 37, cysteine 38, cysteine 42, cysteine 45, cysteine 49, cysteine 51, cysteine 58, cysteine 60, and cysteine 61.

This sequence belongs to the metallothionein superfamily. Type 1 family.

Its function is as follows. Seems to bind zinc and copper. Could play a special role in regulating zinc metabolism during the differentiation of stratified epithelia. This chain is Metallothionein-4 (MT4), found in Homo sapiens (Human).